Reading from the N-terminus, the 91-residue chain is MTDVLVVLKVFPDSDEVNLDNLYTDISSKLPKEYKIIRKETEPIAFGLNALILYVQMPEQTEGGTDNLEEVVNNIQGVSHAEVVGITRLGF.

As to quaternary structure, homodimer.

Promotes the exchange of GDP for GTP in EF-1-alpha/GDP, thus allowing the regeneration of EF-1-alpha/GTP that could then be used to form the ternary complex EF-1-alpha/GTP/AAtRNA. This chain is Elongation factor 1-beta (ef1b), found in Saccharolobus solfataricus (strain ATCC 35092 / DSM 1617 / JCM 11322 / P2) (Sulfolobus solfataricus).